Reading from the N-terminus, the 358-residue chain is MAATSAQHIGLQGHGTSRNDRDRRLVRYWLYAVFAVLIAIVMVGGATRMTGSGLSITEWKPIHGVIPPLNHAEWVEEFEKYQQIPQYQQINKGMSLAEFQYIFWWEWAHRLLARFVGFLVAVPLGFFWLTGRLKGGLKYRMLGLLALGGLQGAIGWWMVASGLSELTSVSQYRLAIHLTTACVIITAVFYIARGLVTYSERPAERSIQRFAGWIVFAVLVQIYLGGLVAGLHAGLTYNTWPLMDGAIIPSDLFTQAPWWRNLFENPKTVQFVHRMFAYTVLLLAILHAVQVWKNAPGTTHARRTIVLVGLVFIQAMIGIATLLMSAPLHLGLTHQFFALVVLAFAVAHWRATKGAYAA.

8 helical membrane-spanning segments follow: residues 25–45 (LVRY…MVGG), 111–131 (LLAR…WLTG), 141–161 (MLGL…MVAS), 176–196 (IHLT…RGLV), 210–230 (FAGW…LVAG), 269–289 (VQFV…LHAV), 304–324 (TIVL…TLLM), and 326–346 (APLH…AFAV). Residue His273 participates in heme binding. His334 lines the heme pocket.

This sequence belongs to the COX15/CtaA family. Type 2 subfamily. Interacts with CtaB. Heme b serves as cofactor.

It is found in the cell membrane. It catalyses the reaction Fe(II)-heme o + 2 A + H2O = Fe(II)-heme a + 2 AH2. It participates in porphyrin-containing compound metabolism; heme A biosynthesis; heme A from heme O: step 1/1. Its function is as follows. Catalyzes the conversion of heme O to heme A by two successive hydroxylations of the methyl group at C8. The first hydroxylation forms heme I, the second hydroxylation results in an unstable dihydroxymethyl group, which spontaneously dehydrates, resulting in the formyl group of heme A. This chain is Heme A synthase, found in Brucella abortus (strain S19).